We begin with the raw amino-acid sequence, 418 residues long: Peptide chain release factor subunit 1 (418 aa).

This sequence belongs to the eukaryotic release factor 1 family. In terms of assembly, heterodimer of two subunits, one of which binds GTP.

The protein localises to the cytoplasm. Functionally, directs the termination of nascent peptide synthesis (translation) in response to the termination codons UAA, UAG and UGA. The sequence is that of Peptide chain release factor subunit 1 from Haloarcula marismortui (strain ATCC 43049 / DSM 3752 / JCM 8966 / VKM B-1809) (Halobacterium marismortui).